The sequence spans 332 residues: Opticin (332 aa).

The N-terminal stretch at 1-19 (MRLLAFLSLLALVLQETGT) is a signal peptide. Residues 21–41 (SLPRKERKRREEQMPREGDSF) are disordered. Over residues 29–39 (RREEQMPREGD) the composition is skewed to basic and acidic residues. Tyr-65 and Tyr-71 each carry sulfotyrosine. A disordered region spans residues 86–106 (ATSISPAKSTTAPGTPSSNPT). One can recognise an LRRNT domain in the interval 116 to 153 (LLSSQPNHGLPTCLVCVCLGSSVYCDDIDLEDIPPLPR). A Sulfotyrosine modification is found at Tyr-139. LRR repeat units lie at residues 154–175 (RTAY…DFKG), 178–199 (KLKR…AFRL), 202–223 (ALQD…PSGI), 248–269 (KLQF…LPLS), 270–290 (LRSV…VFCD), and 300–320 (QLED…PSAY). A disulfide bridge connects residues Cys-289 and Cys-322. Asn-312 is a glycosylation site (N-linked (GlcNAc...) asparagine).

The protein belongs to the small leucine-rich proteoglycan (SLRP) family. SLRP class III subfamily. In terms of assembly, homodimer. O-glycosylated. In terms of processing, proteolytically cleaved by MMP1, MMP2, MMP3, MMP7, MMP8, MMP9, ADAMTS4, and ADAMTS5. Proteolytically cleaved by MMP13. The degradation of OPTC by proteases may contribute to osteoarthritis pathophysiology. Post-translationally, sulfated on tyrosine residues. Expressed in cartilage and synovial membranes (at protein level). Expressed in the retina, iris, ligament, skin and fetal liver (at protein level). Expressed in the retinal pigment epithelium (at protein level). Expressed in synovial fibroblasts and subchondral bone osteoblasts.

The protein localises to the secreted. Its subcellular location is the extracellular space. It localises to the extracellular matrix. Functionally, inhibits angiogenesis in the vitreous humor of the eye, and therefore represses neovascularization. Binds collagen fibrils. May be involved in collagen fiber organization via regulation of other members of the small leucine-rich repeat proteoglycan superfamily. The protein is Opticin (OPTC) of Homo sapiens (Human).